A 260-amino-acid polypeptide reads, in one-letter code: Isoprenyl transferase (260 aa).

Asp38 is an active-site residue. A Mg(2+)-binding site is contributed by Asp38. Substrate contacts are provided by residues 39–42, Trp43, Arg51, His55, and 83–85; these read GNGR and STE. Asn86 serves as the catalytic Proton acceptor. Substrate-binding positions include Trp87, Arg89, Arg206, and 212–214; that span reads RLS. Residue Glu225 coordinates Mg(2+).

Belongs to the UPP synthase family. In terms of assembly, homodimer. The cofactor is Mg(2+).

Catalyzes the condensation of isopentenyl diphosphate (IPP) with allylic pyrophosphates generating different type of terpenoids. The protein is Isoprenyl transferase of Heliobacterium mobile (Heliobacillus mobilis).